The following is a 213-amino-acid chain: Thymidylate kinase (213 aa).

An ATP-binding site is contributed by 10 to 17; that stretch reads GIDGCGKT.

It belongs to the thymidylate kinase family.

It carries out the reaction dTMP + ATP = dTDP + ADP. In terms of biological role, phosphorylation of dTMP to form dTDP in both de novo and salvage pathways of dTTP synthesis. This Synechococcus sp. (strain WH7803) protein is Thymidylate kinase.